The chain runs to 368 residues: Glutamyl-tRNA reductase (368 aa).

Residues 43 to 46 (TCHR), Ser-89, 94 to 96 (EHQ), and Gln-100 contribute to the substrate site. Catalysis depends on Cys-44, which acts as the Nucleophile. Position 164 to 169 (164 to 169 (GTGMMG)) interacts with NADP(+).

The protein belongs to the glutamyl-tRNA reductase family. In terms of assembly, homodimer.

The enzyme catalyses (S)-4-amino-5-oxopentanoate + tRNA(Glu) + NADP(+) = L-glutamyl-tRNA(Glu) + NADPH + H(+). It participates in porphyrin-containing compound metabolism; protoporphyrin-IX biosynthesis; 5-aminolevulinate from L-glutamyl-tRNA(Glu): step 1/2. Its function is as follows. Catalyzes the NADPH-dependent reduction of glutamyl-tRNA(Glu) to glutamate 1-semialdehyde (GSA). This chain is Glutamyl-tRNA reductase, found in Thermosipho melanesiensis (strain DSM 12029 / CIP 104789 / BI429).